Here is a 158-residue protein sequence, read N- to C-terminus: Transcription elongation factor GreA (158 aa).

The stretch at Ala-53–Gln-75 forms a coiled coil.

This sequence belongs to the GreA/GreB family.

In terms of biological role, necessary for efficient RNA polymerase transcription elongation past template-encoded arresting sites. The arresting sites in DNA have the property of trapping a certain fraction of elongating RNA polymerases that pass through, resulting in locked ternary complexes. Cleavage of the nascent transcript by cleavage factors such as GreA or GreB allows the resumption of elongation from the new 3'terminus. GreA releases sequences of 2 to 3 nucleotides. The sequence is that of Transcription elongation factor GreA from Sphingopyxis alaskensis (strain DSM 13593 / LMG 18877 / RB2256) (Sphingomonas alaskensis).